Consider the following 147-residue polypeptide: Large ribosomal subunit protein uL15 (147 aa).

Positions 1-12 (MTLRLNDLKPAD) are enriched in basic and acidic residues. The tract at residues 1–61 (MTLRLNDLKP…GFEGGQTPMQ (61 aa)) is disordered. A compositionally biased stretch (gly residues) spans 23 to 33 (RGIGSGLGKTA). The span at 34–47 (GRGHKGSFARKGGG) shows a compositional bias: basic residues.

The protein belongs to the universal ribosomal protein uL15 family. As to quaternary structure, part of the 50S ribosomal subunit.

Its function is as follows. Binds to the 23S rRNA. In Xanthomonas oryzae pv. oryzae (strain MAFF 311018), this protein is Large ribosomal subunit protein uL15.